The chain runs to 384 residues: uncharacterized protein (384 aa).

A disordered region spans residues 1 to 116; it reads MTEMPKKKFS…FPAAPPPMDS (116 aa). 2 stretches are compositionally biased toward basic and acidic residues: residues 14–70 and 78–95; these read ARGD…RAGD and RFKDKDRDKPRYGDDRPR. S-adenosyl-L-methionine-binding residues include Gly-318, Ile-338, and Leu-347.

The protein belongs to the class IV-like SAM-binding methyltransferase superfamily. RNA methyltransferase TrmH family.

This is an uncharacterized protein from Synechocystis sp. (strain ATCC 27184 / PCC 6803 / Kazusa).